Consider the following 295-residue polypeptide: MTQRTITLIAGPTVSGKSALALQMAQKKNALIINTDSMQVYDVLNILTARPTEADTAIVPHYLYGYVSPALHYSVGQWLCDVRKLLTTFTSKSLIFVGGTGLYFRALLEGLSEIPHISDAVRQKWRLRLDKEGAENLYRQLLRIDAVFAEKISSQDGQRIIRALEVYDVTGKKLSWWQKKKTPPLISPNCSEKILLIPPRQWLYERIHKRLDNMIERGALEEVFAMKKLMLSPFLPAMKAIGMPEFTAYFDGYKSFEDALEMAKTQTRRYAKRQMTWFRNQFDEEWTLISSCEEV.

ATP is bound at residue 11 to 18; it reads GPTVSGKS. Substrate is bound at residue 13-18; it reads TVSGKS. Interaction with substrate tRNA stretches follow at residues 36–39 and 158–162; these read DSMQ and QRIIR.

The protein belongs to the IPP transferase family. As to quaternary structure, monomer. The cofactor is Mg(2+).

The enzyme catalyses adenosine(37) in tRNA + dimethylallyl diphosphate = N(6)-dimethylallyladenosine(37) in tRNA + diphosphate. Its function is as follows. Catalyzes the transfer of a dimethylallyl group onto the adenine at position 37 in tRNAs that read codons beginning with uridine, leading to the formation of N6-(dimethylallyl)adenosine (i(6)A). This chain is tRNA dimethylallyltransferase, found in Bartonella quintana (strain Toulouse) (Rochalimaea quintana).